A 53-amino-acid chain; its full sequence is Natriuretic peptide DNP-2 (53 aa).

C7 and C23 are disulfide-bonded. The propeptide occupies 39-53 (IIRDLHPDSKQSQAA).

It belongs to the natriuretic peptide family. In terms of tissue distribution, expressed by the venom gland.

Its subcellular location is the secreted. Its function is as follows. Exhibits vasodilator, natriuretic and diuretic properties in animal models and human tissues. Acts by stimulating cGMP via the natriuretic peptide receptor 1 (NPR1). Is a poor agonist of the atrial natriuretic peptide receptor 2 (NPR2). Is not degraded by neutral endopeptidase (NEP/MME). Binds to atrial natriuretic peptide clearance receptor (NPR-C/NPR3), which may be responsible of the removal of DNP from the circulation. Increases calcium uptake and induces histamine release from rat peritoneal mast cells. Increases calcium-activated potassium (KCa) current in gastric antral circular smooth muscle cells by increasing cGMP production and activating inositol trisphosphate receptors (IP3Rs). In vivo, reduces both systolic and diastolic blood pressure with no effect on heart rate, when intravenously injected in conscious rabbits. The polypeptide is Natriuretic peptide DNP-2 (Dendroaspis angusticeps (Eastern green mamba)).